The chain runs to 432 residues: Putative D-alanyl-D-alanine carboxypeptidase (432 aa).

The chain crosses the membrane as a helical; Signal-anchor span at residues 7 to 25; sequence ATVLLTFSLSAFAVEYPVL.

This sequence belongs to the peptidase S12 family. YfeW subfamily.

Its subcellular location is the cell inner membrane. It catalyses the reaction Preferential cleavage: (Ac)2-L-Lys-D-Ala-|-D-Ala. Also transpeptidation of peptidyl-alanyl moieties that are N-acyl substituents of D-alanine.. This is Putative D-alanyl-D-alanine carboxypeptidase from Salmonella paratyphi A (strain ATCC 9150 / SARB42).